Consider the following 1811-residue polypeptide: ADP-ribosylation factor guanine nucleotide-exchange factor sec71 (1811 aa).

2 disordered regions span residues M1 to A108 and I316 to S336. Basic and acidic residues-rich tracts occupy residues S33–I49, K57–E73, and P80–E91. At S40 the chain carries Phosphoserine. 2 stretches are compositionally biased toward polar residues: residues S92–A108 and I316–T326. T326 bears the Phosphothreonine mark. Residues S332 and S353 each carry the phosphoserine modification. The HUS box motif lies at N533–I537. Positions T643 to S663 are enriched in basic and acidic residues. The segment at T643–D688 is disordered. The span at G669–D688 shows a compositional bias: polar residues. Positions Q692–N880 constitute an SEC7 domain. The residue at position 741 (S741) is a Phosphoserine. A Phosphothreonine modification is found at T742. D812 contributes to the Mg(2+) binding site. The HDS1 domain stretch occupies residues D889–D1103.

Its subcellular location is the cytoplasm. The protein localises to the golgi apparatus. It is found in the trans-Golgi network. The protein resides in the cytoplasmic vesicle. It localises to the COPI-coated vesicle membrane. Its subcellular location is the COPII-coated vesicle membrane. Guanine exchange factor that acts as an activator of arf1 at the trans-Golgi net-work and is thus involved in vesicular budding and traffic between compartments of the Golgi apparatus. Activation of Arf (ADP-ribosylation factor) GTPases is essential for vesicle formation via recruitment of cargo adapters and coat proteins necessary for Golgi trafficking. Involved in tunicamycin-induced ER stress response and subsequent apoptosis. The protein is ADP-ribosylation factor guanine nucleotide-exchange factor sec71 of Schizosaccharomyces pombe (strain 972 / ATCC 24843) (Fission yeast).